Here is a 661-residue protein sequence, read N- to C-terminus: UvrABC system protein B (661 aa).

A Helicase ATP-binding domain is found at 25–182; it reads AGLSSKKRSQ…NDLINLQYER (158 aa). 38-45 provides a ligand contact to ATP; it reads GITGSGKT. The Beta-hairpin signature appears at 91–114; the sequence is YYDYYQPEAYIARTDTFIEKDSSI. Residues 430 to 592 enclose the Helicase C-terminal domain; sequence QIEDLISEIQ…IIPKTINRTI (163 aa). The UVR domain occupies 621–656; sequence KTHIDKLKKEMLKAASNLEFEQAAKLRDQLKTLEEA.

It belongs to the UvrB family. In terms of assembly, forms a heterotetramer with UvrA during the search for lesions. Interacts with UvrC in an incision complex.

Its subcellular location is the cytoplasm. The UvrABC repair system catalyzes the recognition and processing of DNA lesions. A damage recognition complex composed of 2 UvrA and 2 UvrB subunits scans DNA for abnormalities. Upon binding of the UvrA(2)B(2) complex to a putative damaged site, the DNA wraps around one UvrB monomer. DNA wrap is dependent on ATP binding by UvrB and probably causes local melting of the DNA helix, facilitating insertion of UvrB beta-hairpin between the DNA strands. Then UvrB probes one DNA strand for the presence of a lesion. If a lesion is found the UvrA subunits dissociate and the UvrB-DNA preincision complex is formed. This complex is subsequently bound by UvrC and the second UvrB is released. If no lesion is found, the DNA wraps around the other UvrB subunit that will check the other stand for damage. This chain is UvrABC system protein B, found in Rickettsia massiliae (strain Mtu5).